A 120-amino-acid chain; its full sequence is Cell division protein FtsL (120 aa).

The Cytoplasmic segment spans residues 1 to 36 (MTNLAVKYKQQAQEEVQIQTPPQQMAKPKVKAKITR). Residues 37–57 (IEKLLYVAFIGFLLYACVAFI) form a helical membrane-spanning segment. Topologically, residues 58 to 120 (GNKAGLYQVN…INANNVKGLK (63 aa)) are extracellular.

This sequence belongs to the FtsL family.

The protein localises to the cell membrane. Essential cell division protein. The chain is Cell division protein FtsL from Bacillus cereus (strain ATCC 14579 / DSM 31 / CCUG 7414 / JCM 2152 / NBRC 15305 / NCIMB 9373 / NCTC 2599 / NRRL B-3711).